The sequence spans 290 residues: Hydroxyacylglutathione hydrolase-like protein (290 aa).

Residues His-54, His-56, Asp-58, His-59, His-110, Asp-134, and His-172 each coordinate Zn(2+).

It belongs to the metallo-beta-lactamase superfamily. Glyoxalase II family. It depends on Zn(2+) as a cofactor.

In terms of biological role, hydrolase acting on ester bonds. This is Hydroxyacylglutathione hydrolase-like protein (HAGHL) from Homo sapiens (Human).